The primary structure comprises 401 residues: S-adenosylmethionine synthase (401 aa).

His16 contacts ATP. Asp18 serves as a coordination point for Mg(2+). Residue Glu44 participates in K(+) binding. Glu57 and Gln109 together coordinate L-methionine. The interval 109-119 (QSAHIAQGVDA) is flexible loop. ATP-binding positions include 174–176 (DAK), Asp251, 257–258 (RK), Ala274, and Lys278. Residue Asp251 coordinates L-methionine. L-methionine is bound at residue Lys282.

It belongs to the AdoMet synthase family. Homotetramer; dimer of dimers. The cofactor is Mg(2+). K(+) serves as cofactor.

Its subcellular location is the cytoplasm. The enzyme catalyses L-methionine + ATP + H2O = S-adenosyl-L-methionine + phosphate + diphosphate. The protein operates within amino-acid biosynthesis; S-adenosyl-L-methionine biosynthesis; S-adenosyl-L-methionine from L-methionine: step 1/1. In terms of biological role, catalyzes the formation of S-adenosylmethionine (AdoMet) from methionine and ATP. The overall synthetic reaction is composed of two sequential steps, AdoMet formation and the subsequent tripolyphosphate hydrolysis which occurs prior to release of AdoMet from the enzyme. The chain is S-adenosylmethionine synthase from Novosphingobium aromaticivorans (strain ATCC 700278 / DSM 12444 / CCUG 56034 / CIP 105152 / NBRC 16084 / F199).